Here is a 206-residue protein sequence, read N- to C-terminus: Large ribosomal subunit protein uL4 (206 aa).

Residues 47 to 94 are disordered; sequence NRAQKDRSEINKSTKKPFRQKGTGRARAGRASSPLWRGGGKVFPNSPD. Over residues 49 to 58 the composition is skewed to basic and acidic residues; sequence AQKDRSEINK. The segment covering 59–74 has biased composition (basic residues); it reads STKKPFRQKGTGRARA.

This sequence belongs to the universal ribosomal protein uL4 family. Part of the 50S ribosomal subunit.

Its function is as follows. One of the primary rRNA binding proteins, this protein initially binds near the 5'-end of the 23S rRNA. It is important during the early stages of 50S assembly. It makes multiple contacts with different domains of the 23S rRNA in the assembled 50S subunit and ribosome. Functionally, forms part of the polypeptide exit tunnel. The chain is Large ribosomal subunit protein uL4 from Laribacter hongkongensis (strain HLHK9).